The primary structure comprises 262 residues: Putative outer membrane protein CPn_1034/CP_0818/CPj1034/CpB1074 (262 aa).

An N-terminal signal peptide occupies residues 1-17; the sequence is MKTWLFFTFLFSCSSFY.

It localises to the cell outer membrane. The polypeptide is Putative outer membrane protein CPn_1034/CP_0818/CPj1034/CpB1074 (Chlamydia pneumoniae (Chlamydophila pneumoniae)).